The sequence spans 194 residues: A-type ATP synthase subunit E (194 aa).

This sequence belongs to the V-ATPase E subunit family. In terms of assembly, has multiple subunits with at least A(3), B(3), C, D, E, F, H, I and proteolipid K(x).

The protein resides in the cell membrane. Functionally, component of the A-type ATP synthase that produces ATP from ADP in the presence of a proton gradient across the membrane. This is A-type ATP synthase subunit E from Saccharolobus islandicus (strain Y.N.15.51 / Yellowstone #2) (Sulfolobus islandicus).